The chain runs to 61 residues: Large ribosomal subunit protein bL28 (61 aa).

This sequence belongs to the bacterial ribosomal protein bL28 family.

This chain is Large ribosomal subunit protein bL28, found in Lactobacillus gasseri (strain ATCC 33323 / DSM 20243 / BCRC 14619 / CIP 102991 / JCM 1131 / KCTC 3163 / NCIMB 11718 / NCTC 13722 / AM63).